The primary structure comprises 574 residues: Splicing factor U2af large subunit A (574 aa).

The tract at residues 1-180 (MAEHEEQPYE…SKRVSGFDQG (180 aa)) is disordered. Over residues 18–41 (PAPASAYAEYPAPEGSPPAAAAKP) the composition is skewed to low complexity. Positions 53–143 (RSQHETQPHD…ERRRDRDRDG (91 aa)) are enriched in basic and acidic residues. The span at 144-172 (HRRHRSRSRSPSKGRDRRSRSRSRSRSSK) shows a compositional bias: basic residues. RRM domains are found at residues 238 to 321 (RRVY…RPTD), 358 to 436 (DRIF…RANQ), and 479 to 565 (QVVS…YPED).

It belongs to the splicing factor SR family.

Its subcellular location is the nucleus. Necessary for the splicing of pre-mRNA. The sequence is that of Splicing factor U2af large subunit A (U2AF65A) from Oryza sativa subsp. japonica (Rice).